The following is a 60-amino-acid chain: Naniproin (60 aa).

4 disulfides stabilise this stretch: C3/C21, C14/C38, C42/C53, and C54/C59.

Belongs to the three-finger toxin family. Short-chain subfamily. Type IA cytotoxin sub-subfamily. Monomer in solution; Homodimer and oligomer in the presence of negatively charged lipids forming a pore with a size ranging between 20 and 30 angstroms. Expressed by the venom gland.

The protein resides in the secreted. The protein localises to the target cell membrane. Its function is as follows. Basic protein that binds to cell membrane and depolarizes cardiomyocytes. This cytotoxin also possesses lytic activity on many other cells, including red blood cells. Interaction with sulfatides in the cell membrane induces pore formation and cell internalization and is responsible for cytotoxicity in cardiomyocytes. It targets the mitochondrial membrane and induces mitochondrial swelling and fragmentation. Inhibits protein kinases C. It binds to the integrin alpha-V/beta-3 with a moderate affinity. This chain is Naniproin, found in Naja nigricollis (Black-necked spitting cobra).